We begin with the raw amino-acid sequence, 236 residues long: Orotidine 5'-phosphate decarboxylase (236 aa).

Substrate-binding positions include Asp14, Lys36, 63–72 (DLKYHDIPNT), Thr122, Arg183, Gln192, Gly212, and Arg213. Catalysis depends on Lys65, which acts as the Proton donor.

This sequence belongs to the OMP decarboxylase family. Type 1 subfamily. As to quaternary structure, homodimer.

The enzyme catalyses orotidine 5'-phosphate + H(+) = UMP + CO2. It functions in the pathway pyrimidine metabolism; UMP biosynthesis via de novo pathway; UMP from orotate: step 2/2. Its function is as follows. Catalyzes the decarboxylation of orotidine 5'-monophosphate (OMP) to uridine 5'-monophosphate (UMP). The polypeptide is Orotidine 5'-phosphate decarboxylase (Halorhodospira halophila (strain DSM 244 / SL1) (Ectothiorhodospira halophila (strain DSM 244 / SL1))).